The sequence spans 644 residues: SURP and G-patch domain-containing protein 1 (644 aa).

Positions 44–54 (REIEARMEQKA) are enriched in basic and acidic residues. Disordered stretches follow at residues 44 to 74 (REIE…ADAQ) and 98 to 122 (AQAS…KRPL). Residue threonine 128 is modified to Phosphothreonine. The SURP motif 1 repeat unit spans residues 188 to 230 (VIEKLARFVAEGGPELEKVAMEDYKDNPAFTFLHDKNSREFLY). Phosphoserine is present on serine 253. One copy of the SURP motif 2 repeat lies at 263-306 (LAEKLARFIADGGPEVETIALQNNRENQAFSFLYDPNSQGYRYY). 2 disordered regions span residues 316-342 (AKAG…PEAL) and 360-412 (PAVN…PSPL). Position 323 is a phosphoserine (serine 323). Residues 360–369 (PAVNPTPSIP) are compositionally biased toward pro residues. Residues 379–385 (KRKRKSR) carry the Nuclear localization signal motif. Phosphoserine is present on residues serine 408, serine 410, serine 413, and serine 484. The 48-residue stretch at 561-608 (VENIGYQMLMKMGWKEGEGLGTEGQGIKNPVNKGATTIDGAGFGIDRP) folds into the G-patch domain.

In terms of assembly, component of the spliceosome.

The protein localises to the nucleus. Its function is as follows. Plays a role in pre-mRNA splicing. The sequence is that of SURP and G-patch domain-containing protein 1 (Sugp1) from Rattus norvegicus (Rat).